We begin with the raw amino-acid sequence, 62 residues long: Conotoxin reg3.5 (62 aa).

The signal sequence occupies residues 1-22 (MMFKLGVLLTICLLLFPLTGTA). Positions 23 to 49 (LDGDQLAEHMLDISSGINDRWFDPVRK) are excised as a propeptide. 3 disulfide bridges follow: cysteine 50–cysteine 60, cysteine 51–cysteine 58, and cysteine 56–cysteine 61.

It belongs to the conotoxin M superfamily. Expressed by the venom duct.

It localises to the secreted. The sequence is that of Conotoxin reg3.5 from Conus regius (Crown cone).